The sequence spans 317 residues: Ubiquinone biosynthesis protein COQ9, mitochondrial (317 aa).

Residues 1 to 46 (MAASVARVLKAAGGRQLLLMVARRRPVLRQPFLLMPRKFWGTSALR) constitute a mitochondrion transit peptide. The tract at residues 45–97 (LRSEDQKQPPFSSTSAHAGTPEHAEEQYQQQQPPPRYTDQAGEESEGYESEEQ) is disordered. Residues 85–96 (AGEESEGYESEE) are compositionally biased toward acidic residues. R243 contributes to the a 1,2-diacylglycero-3-phosphoethanolamine binding site.

This sequence belongs to the COQ9 family. In terms of assembly, homodimer. Heterodimer; two heterodimers of COQ7:COQ9 come together on the same side of the lipid pseudo-bilayer and form a curved tetramer with a hydrophobic surface suitable for membrane interaction. These two tetramers assemble into a soluble octamer with a pseudo-bilayer of lipids captured within. Interacts with COQ7; this interaction allows ubiquinone (CoQ) isoprene intermediates presentation to COQ7 and facilitates the COQ7-mediated hydroxylase step.

It localises to the mitochondrion. Its pathway is cofactor biosynthesis; ubiquinone biosynthesis. Membrane-associated protein that warps the membrane surface to access and bind aromatic isoprenes with high specificity, including ubiquinone (CoQ) isoprene intermediates and presents them directly to COQ7, therefore facilitating the COQ7-mediated hydroxylase step. Participates in the biosynthesis of coenzyme Q, also named ubiquinone, an essential lipid-soluble electron transporter for aerobic cellular respiration. The protein is Ubiquinone biosynthesis protein COQ9, mitochondrial of Xenopus tropicalis (Western clawed frog).